The chain runs to 511 residues: Movement protein (511 aa).

The protein localises to the host cell junction. The protein resides in the host plasmodesma. Its subcellular location is the host cytoplasm. In terms of biological role, transports viral genome to neighboring plant cells directly through plasmosdesmata, without any budding. The movement protein allows efficient cell to cell propagation, by bypassing the host cell wall barrier. The sequence is that of Movement protein from Rice gall dwarf virus (RGDV).